The sequence spans 21 residues: Agglutinin beta-1 chain (21 aa).

Positions 1–10 are enriched in polar residues; sequence NGPNGKSQSI. A disordered region spans residues 1–21; it reads NGPNGKSQSIIVGPWGDRVTN.

This sequence belongs to the jacalin lectin family. In terms of assembly, formed of four alpha chains and four beta chains.

Its function is as follows. D-galactose-specific lectin, binds the T-antigen structure Gal-beta1,3-GalNAc. This chain is Agglutinin beta-1 chain, found in Maclura pomifera (Osage orange).